The chain runs to 305 residues: 4-diphosphocytidyl-2-C-methyl-D-erythritol kinase (305 aa).

The active site involves K17. Residue 111-121 (PVASGIGGGSA) coordinates ATP. Residue D154 is part of the active site.

Belongs to the GHMP kinase family. IspE subfamily.

It catalyses the reaction 4-CDP-2-C-methyl-D-erythritol + ATP = 4-CDP-2-C-methyl-D-erythritol 2-phosphate + ADP + H(+). Its pathway is isoprenoid biosynthesis; isopentenyl diphosphate biosynthesis via DXP pathway; isopentenyl diphosphate from 1-deoxy-D-xylulose 5-phosphate: step 3/6. In terms of biological role, catalyzes the phosphorylation of the position 2 hydroxy group of 4-diphosphocytidyl-2C-methyl-D-erythritol. This Gluconacetobacter diazotrophicus (strain ATCC 49037 / DSM 5601 / CCUG 37298 / CIP 103539 / LMG 7603 / PAl5) protein is 4-diphosphocytidyl-2-C-methyl-D-erythritol kinase.